Consider the following 104-residue polypeptide: Thioredoxin-2 (104 aa).

Residues 2–104 (VTQLKSASEY…AIKQAIASNV (103 aa)) enclose the Thioredoxin domain. Active-site nucleophile residues include Cys-31 and Cys-34. Residues Cys-31 and Cys-34 are joined by a disulfide bond. Ser-62 is modified (phosphoserine). Glycyl lysine isopeptide (Lys-Gly) (interchain with G-Cter in ubiquitin) cross-links involve residues Lys-67 and Lys-97.

This sequence belongs to the thioredoxin family. Monomer. Part of the heterodimeric LMA1 complex together with the proteinase inhibitor PBI2. LMA1 binds to the ATPase SEC18. In terms of processing, reversible disulfide bond formation between Cys-31 and Cys-34, reverted by thioredoxin reductase TRR1 using NADPH as hydrogen donor.

It is found in the cytoplasm. The protein resides in the golgi apparatus membrane. Its subcellular location is the nucleus. In terms of biological role, participates as a hydrogen donor in redox reactions through the reversible oxidation of its active center dithiol to a disulfide, accompanied by the transfer of 2 electrons and 2 protons. It is involved in many cellular processes, including deoxyribonucleotide synthesis, repair of oxidatively damaged proteins, protein folding, sulfur metabolism, and redox homeostasis. Thioredoxin-dependent enzymes include phosphoadenosine-phosphosulfate reductase MET16, alkyl-hydroperoxide reductase DOT5, thioredoxin peroxidases TSA1 and TSA2, alkyl hydroperoxide reductase AHP1, and peroxiredoxin HYR1. Thioredoxin is also involved in protection against reducing stress. As part of the LMA1 complex, it is involved in the facilitation of vesicle fusion such as homotypic vacuole and ER-derived COPII vesicle fusion with the Golgi. This activity does not require the redox mechanism. Through its capacity to inactivate the stress response transcription factor YAP1 and its regulator the hydroperoxide stress sensor HYR1, it is involved in feedback regulation of stress response gene expression upon oxidative stress. In Saccharomyces cerevisiae (strain ATCC 204508 / S288c) (Baker's yeast), this protein is Thioredoxin-2 (TRX2).